We begin with the raw amino-acid sequence, 204 residues long: VEL1-related protein AC977.05c (204 aa).

Residues 1 to 17 (MIFKNLISLFFIGLATA) form the signal peptide.

The protein belongs to the VEL1 family.

The protein resides in the cytoplasm. The protein localises to the cytosol. This chain is VEL1-related protein AC977.05c, found in Schizosaccharomyces pombe (strain 972 / ATCC 24843) (Fission yeast).